The following is a 300-amino-acid chain: Ribosomal protein L11 methyltransferase (300 aa).

Residues Thr-152, Gly-173, Asp-195, and Asn-234 each coordinate S-adenosyl-L-methionine.

It belongs to the methyltransferase superfamily. PrmA family.

The protein resides in the cytoplasm. The catalysed reaction is L-lysyl-[protein] + 3 S-adenosyl-L-methionine = N(6),N(6),N(6)-trimethyl-L-lysyl-[protein] + 3 S-adenosyl-L-homocysteine + 3 H(+). Methylates ribosomal protein L11. This Burkholderia cenocepacia (strain HI2424) protein is Ribosomal protein L11 methyltransferase.